The following is a 249-amino-acid chain: Putative TrmH family tRNA/rRNA methyltransferase (249 aa).

S-adenosyl-L-methionine-binding residues include glycine 196, isoleucine 216, and leucine 225.

Belongs to the class IV-like SAM-binding methyltransferase superfamily. RNA methyltransferase TrmH family.

The chain is Putative TrmH family tRNA/rRNA methyltransferase from Staphylococcus epidermidis (strain ATCC 35984 / DSM 28319 / BCRC 17069 / CCUG 31568 / BM 3577 / RP62A).